Consider the following 82-residue polypeptide: Small ribosomal subunit protein bS16 (82 aa).

Belongs to the bacterial ribosomal protein bS16 family.

The chain is Small ribosomal subunit protein bS16 from Crocosphaera subtropica (strain ATCC 51142 / BH68) (Cyanothece sp. (strain ATCC 51142)).